The primary structure comprises 210 residues: Uridine kinase (210 aa).

Residue 13–20 (GGSGSGKT) coordinates ATP.

The protein belongs to the uridine kinase family.

It is found in the cytoplasm. The enzyme catalyses uridine + ATP = UMP + ADP + H(+). The catalysed reaction is cytidine + ATP = CMP + ADP + H(+). It functions in the pathway pyrimidine metabolism; CTP biosynthesis via salvage pathway; CTP from cytidine: step 1/3. Its pathway is pyrimidine metabolism; UMP biosynthesis via salvage pathway; UMP from uridine: step 1/1. The protein is Uridine kinase of Oceanobacillus iheyensis (strain DSM 14371 / CIP 107618 / JCM 11309 / KCTC 3954 / HTE831).